Here is a 152-residue protein sequence, read N- to C-terminus: Eukaryotic translation initiation factor 2 subunit 3 (152 aa).

Residue A1 is modified to N-acetylalanine. 51-54 is a binding site for GTP; sequence NKID.

Belongs to the TRAFAC class translation factor GTPase superfamily. Classic translation factor GTPase family. EIF2G subfamily. Eukaryotic translation initiation factor 2 eIF2 is a heterotrimeric complex composed of an alpha (EIF2S1), a beta (EIF2S2) and a gamma (EIF2S3) chain. eIF2 is member of the 43S pre-initiation complex (43S PIC). Interacts (via C-terminus) with CDC123; the interaction is direct.

The protein resides in the cytoplasm. It is found in the cytosol. Its function is as follows. Member of the eIF2 complex that functions in the early steps of protein synthesis by forming a ternary complex with GTP and initiator tRNA. This complex binds to a 40S ribosomal subunit, followed by mRNA binding to form the 43S pre-initiation complex (43S PIC). Junction of the 60S ribosomal subunit to form the 80S initiation complex is preceded by hydrolysis of the GTP bound to eIF2 and release of an eIF2-GDP binary complex. In order for eIF2 to recycle and catalyze another round of initiation, the GDP bound to eIF2 must exchange with GTP by way of a reaction catalyzed by eIF-2B. This is Eukaryotic translation initiation factor 2 subunit 3 (EIF2S3) from Oryctolagus cuniculus (Rabbit).